A 600-amino-acid chain; its full sequence is Oligopeptide-binding protein OppA (600 aa).

The signal sequence occupies residues Met-1–Ala-22. Cys-23 carries the N-palmitoyl cysteine lipid modification. Cys-23 is lipidated: S-diacylglycerol cysteine.

Belongs to the bacterial solute-binding protein 5 family. The complex is composed of two ATP-binding proteins (OppD and OppF), two transmembrane proteins (OppB and OppC) and a solute-binding protein (OppA).

It localises to the cell membrane. Functionally, part of the ABC transporter complex OppABCDF involved in the uptake of oligopeptides. Essential for uptake of peptides larger than three amino acids and for growth in milk. The chain is Oligopeptide-binding protein OppA from Lactococcus lactis subsp. lactis (Streptococcus lactis).